Here is a 109-residue protein sequence, read N- to C-terminus: Large ribosomal subunit protein P1C (109 aa).

Residues 68-83 (ASAPTAAGAGAAAPAE) show a composition bias toward low complexity. Positions 68–109 (ASAPTAAGAGAAAPAEAAEEEKKEEAKEEEESDEDMGFGLFD) are disordered. A compositionally biased stretch (acidic residues) spans 94–103 (KEEEESDEDM). Phosphoserine is present on serine 99.

It belongs to the eukaryotic ribosomal protein P1/P2 family. Component of the large ribosomal subunit (LSU). Mature yeast ribosomes consist of a small (40S) and a large (60S) subunit. The 40S small subunit contains 1 molecule of ribosomal RNA (18S rRNA) and at least 33 different proteins. The large 60S subunit contains 3 rRNA molecules (25S, 5.8S and 5S rRNA) and at least 46 different proteins. The acidic ribosomal P-proteins form the stalk structure of the 60S subunit. They are organized as a pentameric complex in which uL10/P0 interacts with 2 heterodimers of P1 and P2 proteins.

Its subcellular location is the cytoplasm. In terms of biological role, component of the ribosome, a large ribonucleoprotein complex responsible for the synthesis of proteins in the cell. The small ribosomal subunit (SSU) binds messenger RNAs (mRNAs) and translates the encoded message by selecting cognate aminoacyl-transfer RNA (tRNA) molecules. The large subunit (LSU) contains the ribosomal catalytic site termed the peptidyl transferase center (PTC), which catalyzes the formation of peptide bonds, thereby polymerizing the amino acids delivered by tRNAs into a polypeptide chain. The nascent polypeptides leave the ribosome through a tunnel in the LSU and interact with protein factors that function in enzymatic processing, targeting, and the membrane insertion of nascent chains at the exit of the ribosomal tunnel. The sequence is that of Large ribosomal subunit protein P1C (rpp103) from Schizosaccharomyces pombe (strain 972 / ATCC 24843) (Fission yeast).